The following is a 158-amino-acid chain: Phosphopantetheine adenylyltransferase (158 aa).

Position 10 (Thr10) interacts with substrate. Residues 10-11 (TF) and His18 each bind ATP. Residues Lys42, Leu74, and Arg88 each contribute to the substrate site. ATP contacts are provided by residues 89–91 (GIR), Glu99, and 124–130 (WRYLSST).

This sequence belongs to the bacterial CoaD family. Homohexamer. It depends on Mg(2+) as a cofactor.

The protein resides in the cytoplasm. The catalysed reaction is (R)-4'-phosphopantetheine + ATP + H(+) = 3'-dephospho-CoA + diphosphate. It participates in cofactor biosynthesis; coenzyme A biosynthesis; CoA from (R)-pantothenate: step 4/5. In terms of biological role, reversibly transfers an adenylyl group from ATP to 4'-phosphopantetheine, yielding dephospho-CoA (dPCoA) and pyrophosphate. This chain is Phosphopantetheine adenylyltransferase, found in Actinobacillus pleuropneumoniae serotype 7 (strain AP76).